We begin with the raw amino-acid sequence, 107 residues long: Small ribosomal subunit protein uS10 (107 aa).

This sequence belongs to the universal ribosomal protein uS10 family. In terms of assembly, part of the 30S ribosomal subunit.

In terms of biological role, involved in the binding of tRNA to the ribosomes. The chain is Small ribosomal subunit protein uS10 from Deinococcus deserti (strain DSM 17065 / CIP 109153 / LMG 22923 / VCD115).